We begin with the raw amino-acid sequence, 309 residues long: Serine/threonine-protein phosphatase 2A catalytic subunit alpha isoform (309 aa).

Asp-57, His-59, Asp-85, and Asn-117 together coordinate Mn(2+). The Zn(2+) site is built by Asp-57, His-59, and Asp-85. Positions 85 and 117 each coordinate Fe(3+). Residue His-118 is the Proton donor of the active site. 2 residues coordinate Mn(2+): His-167 and His-241. Fe(3+) contacts are provided by His-167 and His-241. Tyr-307 is modified (phosphotyrosine). Leu-309 carries the post-translational modification Leucine methyl ester.

The protein belongs to the PPP phosphatase family. PP-1 subfamily. In terms of assembly, PP2A consists of a common heterodimeric core enzyme composed of PPP2CA, a 36 kDa catalytic subunit (subunit C), and PPP2R1A, a 65 kDa constant regulatory subunit (PR65 or subunit A), that associates with a variety of regulatory subunits. Proteins that associate with the core dimer include three families of regulatory subunits B (the R2/B/PR55/B55, R3/B''/PR72/PR130/PR59 and R5/B'/B56 families), the 48 kDa variable regulatory subunit, viral proteins, and cell signaling molecules. Interacts with the PP2A A subunit PPP2R1A. Interacts with the regulatory subunit PPP2R2A. Interacts (via C-terminus) with PTPA. Interacts with NXN; the interaction is direct. Interacts with KCTD20. Interacts with BTBD10. Interacts with SGO1 and SGO2. Interacts with RAF1. Interaction with IGBP1 protects unassembled PPP2CA from degradative ubiquitination. Interacts with GSK3B (via C2 domain). Interacts with MFHAS1; retains PPP2CA into the cytoplasm and excludes it from the nucleus. Interacts with PABIR1/FAM122A. Interacts with ADCY8; interaction is phosphatase activity-dependent; antagonizes interaction between ADCY8 and calmodulin. Interacts with CRTC3 (when phosphorylated at 'Ser-391'). Interacts with SPRY2; the interaction is inhibited by TESK1 interaction with SPRY2, possibly by vesicular sequestration of SPRY2. Interacts with TRAF3IP3. Interacts with AMBRA1 (via PxP motifs); enhancing interaction between PPP2CA and MYC or FOXO3. Forms a complex with AMBRA1 and BECN1; AMBRA1 and BECN1 components of the complex regulate MYC stability via different pathways. Part of the core of STRIPAK complexes composed of PP2A catalytic and scaffolding subunits, the striatins (PP2A regulatory subunits), the striatin-associated proteins MOB4, STRIP1 and STRIP2, PDCD10 and members of the STE20 kinases, such as STK24 and STK26. Phosphatase component of the Integrator-PP2A (INTAC) complex, composed of the Integrator core complex and protein phosphatase 2A subunits PPP2CA and PPP2R1A. Mn(2+) is required as a cofactor. Fe(3+) serves as cofactor. The cofactor is Zn(2+). In terms of processing, reversibly methyl esterified on Leu-309 by leucine carboxyl methyltransferase 1 (LCMT1) and protein phosphatase methylesterase 1 (PPME1). Carboxyl methylation influences the affinity of the catalytic subunit for the different regulatory subunits, thereby modulating the PP2A holoenzyme's substrate specificity, enzyme activity and cellular localization. Phosphorylation of either threonine (by autophosphorylation-activated protein kinase) or tyrosine results in inactivation of the phosphatase. Auto-dephosphorylation has been suggested as a mechanism for reactivation. Post-translationally, polyubiquitinated, leading to its degradation by the proteasome.

The protein localises to the cytoplasm. It is found in the nucleus. Its subcellular location is the chromosome. The protein resides in the centromere. It localises to the cytoskeleton. The protein localises to the spindle pole. It carries out the reaction O-phospho-L-seryl-[protein] + H2O = L-seryl-[protein] + phosphate. The catalysed reaction is O-phospho-L-threonyl-[protein] + H2O = L-threonyl-[protein] + phosphate. With respect to regulation, inhibited by the interaction between PPP2R2A and ARPP19; this inhibition is enhanced when ARPP19 is phosphorylated. Inhibited by the interaction between PPP2R2A and PABIR1/FAM122A. Catalytic subunit of protein phosphatase 2A (PP2A), a serine/threonine phosphatase involved in the regulation of a wide variety of enzymes, signal transduction pathways, and cellular events. PP2A is the major phosphatase for microtubule-associated proteins (MAPs). PP2A can modulate the activity of phosphorylase B kinase casein kinase 2, mitogen-stimulated S6 kinase, and MAP-2 kinase. Cooperates with SGO2 to protect centromeric cohesin from separase-mediated cleavage in oocytes specifically during meiosis I. Can dephosphorylate various proteins, such as SV40 large T antigen, AXIN1, p53/TP53, PIM3, WEE1. Activates RAF1 by dephosphorylating it at 'Ser-259'. Mediates dephosphorylation of WEE1, preventing its ubiquitin-mediated proteolysis, increasing WEE1 protein levels, and promoting the G2/M checkpoint. Mediates dephosphorylation of MYC; promoting its ubiquitin-mediated proteolysis: interaction with AMBRA1 enhances interaction between PPP2CA and MYC. Mediates dephosphorylation of FOXO3; promoting its stabilization: interaction with AMBRA1 enhances interaction between PPP2CA and FOXO3. Catalyzes dephosphorylation of the pyrin domain of NLRP3, promoting assembly of the NLRP3 inflammasome. Together with RACK1 adapter, mediates dephosphorylation of AKT1 at 'Ser-473', preventing AKT1 activation and AKT-mTOR signaling pathway. Dephosphorylation of AKT1 is essential for regulatory T-cells (Treg) homeostasis and stability. Catalyzes dephosphorylation of PIM3, promotinh PIM3 ubiquitination and proteasomal degradation. Part of the striatin-interacting phosphatase and kinase (STRIPAK) complexes. STRIPAK complexes have critical roles in protein (de)phosphorylation and are regulators of multiple signaling pathways including Hippo, MAPK, nuclear receptor and cytoskeleton remodeling. Different types of STRIPAK complexes are involved in a variety of biological processes such as cell growth, differentiation, apoptosis, metabolism and immune regulation. Key mediator of a quality checkpoint during transcription elongation as part of the Integrator-PP2A (INTAC) complex. The INTAC complex drives premature transcription termination of transcripts that are unfavorably configured for transcriptional elongation: within the INTAC complex, PPP2CA catalyzes dephosphorylation of the C-terminal domain (CTD) of Pol II subunit POLR2A/RPB1 and SUPT5H/SPT5, thereby preventing transcriptional elongation. This is Serine/threonine-protein phosphatase 2A catalytic subunit alpha isoform (PPP2CA) from Homo sapiens (Human).